Consider the following 159-residue polypeptide: NAD(P)H-quinone oxidoreductase subunit I, chloroplastic (159 aa).

4Fe-4S ferredoxin-type domains lie at 55–84 (GRIH…VDWN) and 95–124 (KNYS…MTEE). Positions 64, 67, 70, 74, 104, 107, 110, and 114 each coordinate [4Fe-4S] cluster.

It belongs to the complex I 23 kDa subunit family. In terms of assembly, NDH is composed of at least 16 different subunits, 5 of which are encoded in the nucleus. [4Fe-4S] cluster is required as a cofactor.

It localises to the plastid. The protein resides in the chloroplast thylakoid membrane. The enzyme catalyses a plastoquinone + NADH + (n+1) H(+)(in) = a plastoquinol + NAD(+) + n H(+)(out). The catalysed reaction is a plastoquinone + NADPH + (n+1) H(+)(in) = a plastoquinol + NADP(+) + n H(+)(out). In terms of biological role, NDH shuttles electrons from NAD(P)H:plastoquinone, via FMN and iron-sulfur (Fe-S) centers, to quinones in the photosynthetic chain and possibly in a chloroplast respiratory chain. The immediate electron acceptor for the enzyme in this species is believed to be plastoquinone. Couples the redox reaction to proton translocation, and thus conserves the redox energy in a proton gradient. This Chara vulgaris (Common stonewort) protein is NAD(P)H-quinone oxidoreductase subunit I, chloroplastic.